Here is a 140-residue protein sequence, read N- to C-terminus: Ribosome-binding factor A (140 aa).

The segment at 121–140 (KAAEHGREDEELDDTEQDDK) is disordered. Over residues 129–140 (DEELDDTEQDDK) the composition is skewed to acidic residues.

The protein belongs to the RbfA family. Monomer. Binds 30S ribosomal subunits, but not 50S ribosomal subunits or 70S ribosomes.

Its subcellular location is the cytoplasm. In terms of biological role, one of several proteins that assist in the late maturation steps of the functional core of the 30S ribosomal subunit. Associates with free 30S ribosomal subunits (but not with 30S subunits that are part of 70S ribosomes or polysomes). Required for efficient processing of 16S rRNA. May interact with the 5'-terminal helix region of 16S rRNA. The chain is Ribosome-binding factor A from Shewanella loihica (strain ATCC BAA-1088 / PV-4).